A 1185-amino-acid chain; its full sequence is 205 kDa microtubule-associated protein (1185 aa).

Residues 146-159 (EPNQLPEQLQQQQQ) are compositionally biased toward low complexity. The disordered stretch occupies residues 146–196 (EPNQLPEQLQQQQQIESQGVHEDPRQEDEDEHSSVATTYGTSSLSENNSSP). A compositionally biased stretch (polar residues) spans 179–196 (SVATTYGTSSLSENNSSP). S354 and S448 each carry phosphoserine. Phosphotyrosine is present on Y450. Residues S709, S710, and S712 each carry the phosphoserine modification. T721 bears the Phosphothreonine mark. S728 carries the post-translational modification Phosphoserine. Residues 745–977 (TAADGQSISQ…ASTKVRPAAT (233 aa)) form a microtubule-binding region. Over residues 856 to 866 (SIATKTSTTSS) the composition is skewed to low complexity. 2 disordered regions span residues 856 to 1035 (SIAT…TSTA) and 1054 to 1114 (SASL…SSPA). 2 stretches are compositionally biased toward polar residues: residues 867-881 (LTGNPRKSLSSNVGS) and 908-936 (TITNKPTASGTASDNVTRTTLRPLVSTNA). S874 carries the post-translational modification Phosphoserine. The segment covering 940–952 (ATSGTGSVASSTA) has biased composition (low complexity). The segment covering 989–999 (PRSTISSTTTV) has biased composition (polar residues). Residues 1003-1015 (PSTSTPSFSTRSP) are compositionally biased toward low complexity. 2 stretches are compositionally biased toward polar residues: residues 1016-1026 (NKQQSNGLGKN) and 1054-1066 (SASLTYNNGSTSR). 2 positions are modified to phosphoserine: S1075 and S1086. A compositionally biased stretch (polar residues) spans 1100-1111 (LTPQSKDGTAKS). S1121 is modified (phosphoserine).

It is found in the cytoplasm. It localises to the cytoskeleton. The protein resides in the spindle. Its function is as follows. May play an important role in the regulation of microtubule assembly and interaction. The chain is 205 kDa microtubule-associated protein (Map205) from Drosophila melanogaster (Fruit fly).